A 250-amino-acid polypeptide reads, in one-letter code: Ubiquinone/menaquinone biosynthesis C-methyltransferase UbiE (250 aa).

S-adenosyl-L-methionine is bound by residues T74, D94, 122 to 123 (DA), and S139.

It belongs to the class I-like SAM-binding methyltransferase superfamily. MenG/UbiE family.

The catalysed reaction is a 2-demethylmenaquinol + S-adenosyl-L-methionine = a menaquinol + S-adenosyl-L-homocysteine + H(+). It catalyses the reaction a 2-methoxy-6-(all-trans-polyprenyl)benzene-1,4-diol + S-adenosyl-L-methionine = a 5-methoxy-2-methyl-3-(all-trans-polyprenyl)benzene-1,4-diol + S-adenosyl-L-homocysteine + H(+). Its pathway is quinol/quinone metabolism; menaquinone biosynthesis; menaquinol from 1,4-dihydroxy-2-naphthoate: step 2/2. It participates in cofactor biosynthesis; ubiquinone biosynthesis. Functionally, methyltransferase required for the conversion of demethylmenaquinol (DMKH2) to menaquinol (MKH2) and the conversion of 2-polyprenyl-6-methoxy-1,4-benzoquinol (DDMQH2) to 2-polyprenyl-3-methyl-6-methoxy-1,4-benzoquinol (DMQH2). The sequence is that of Ubiquinone/menaquinone biosynthesis C-methyltransferase UbiE from Paracoccus denitrificans (strain Pd 1222).